The primary structure comprises 233 residues: Cysteine-rich venom protein LIO1 (233 aa).

A signal peptide spans 1–18; the sequence is MIVFILLSFAAVLQQSFG. In terms of domain architecture, SCP spans 37 to 165; sequence VDTHNSYRRS…PYNYFYVCQY (129 aa). Intrachain disulfides connect cysteine 74–cysteine 152, cysteine 91–cysteine 166, cysteine 147–cysteine 163, cysteine 185–cysteine 192, cysteine 188–cysteine 197, cysteine 210–cysteine 228, and cysteine 219–cysteine 232. Residues 201 to 233 form the ShKT domain; sequence CTSENVFTNCNDMVKESGCQDERMKSICPASCF.

This sequence belongs to the CRISP family. As to expression, expressed by the venom gland.

It is found in the secreted. In terms of biological role, blocks contraction of smooth muscle elicited by high potassium-induced depolarization, but does not block caffeine-stimulated contraction. May target voltage-gated calcium channels on smooth muscle. The chain is Cysteine-rich venom protein LIO1 from Erythrolamprus poecilogyrus (Water snake).